Here is a 99-residue protein sequence, read N- to C-terminus: Large ribosomal subunit protein uL23 (99 aa).

Belongs to the universal ribosomal protein uL23 family. As to quaternary structure, part of the 50S ribosomal subunit. Contacts protein L29, and trigger factor when it is bound to the ribosome.

Functionally, one of the early assembly proteins it binds 23S rRNA. One of the proteins that surrounds the polypeptide exit tunnel on the outside of the ribosome. Forms the main docking site for trigger factor binding to the ribosome. The polypeptide is Large ribosomal subunit protein uL23 (Lachnoclostridium phytofermentans (strain ATCC 700394 / DSM 18823 / ISDg) (Clostridium phytofermentans)).